A 55-amino-acid polypeptide reads, in one-letter code: Large ribosomal subunit protein bL33 (55 aa).

The protein belongs to the bacterial ribosomal protein bL33 family.

This chain is Large ribosomal subunit protein bL33, found in Granulibacter bethesdensis (strain ATCC BAA-1260 / CGDNIH1).